The following is a 402-amino-acid chain: Nodal homolog 4-A (402 aa).

The N-terminal stretch at 1–18 (MHLYFYCLILLFVPGGNS) is a signal peptide. The propeptide occupies 19–278 (LGINSYLKHM…TIAHTRRHRR (260 aa)). N-linked (GlcNAc...) asparagine glycans are attached at residues Asn-37, Asn-238, and Asn-340. 3 cysteine pairs are disulfide-bonded: Cys-302–Cys-368, Cys-331–Cys-399, and Cys-335–Cys-401.

Belongs to the TGF-beta family. Homodimer; disulfide-linked. As to expression, during blastula stages, expressed in the endoderm at a higher level dorsally than ventrally. Expressed in the deep cells of the Spemann organizer at the gastrula stage. Expressed in the notochord (a derivative of the organizer) and neural tube during the neural stages.

It localises to the secreted. Its function is as follows. Cooperation and regulatory loops of multiple nodals are essential for mesendoderm patterning in early embryos. Plays a role in mesoderm formation and may be required for neural development. This chain is Nodal homolog 4-A (nodal4-a), found in Xenopus laevis (African clawed frog).